The sequence spans 494 residues: Aspartyl/glutamyl-tRNA(Asn/Gln) amidotransferase subunit B (494 aa).

Belongs to the GatB/GatE family. GatB subfamily. Heterotrimer of A, B and C subunits.

The enzyme catalyses L-glutamyl-tRNA(Gln) + L-glutamine + ATP + H2O = L-glutaminyl-tRNA(Gln) + L-glutamate + ADP + phosphate + H(+). The catalysed reaction is L-aspartyl-tRNA(Asn) + L-glutamine + ATP + H2O = L-asparaginyl-tRNA(Asn) + L-glutamate + ADP + phosphate + 2 H(+). Its function is as follows. Allows the formation of correctly charged Asn-tRNA(Asn) or Gln-tRNA(Gln) through the transamidation of misacylated Asp-tRNA(Asn) or Glu-tRNA(Gln) in organisms which lack either or both of asparaginyl-tRNA or glutaminyl-tRNA synthetases. The reaction takes place in the presence of glutamine and ATP through an activated phospho-Asp-tRNA(Asn) or phospho-Glu-tRNA(Gln). This is Aspartyl/glutamyl-tRNA(Asn/Gln) amidotransferase subunit B from Rhizorhabdus wittichii (strain DSM 6014 / CCUG 31198 / JCM 15750 / NBRC 105917 / EY 4224 / RW1) (Sphingomonas wittichii).